A 364-amino-acid polypeptide reads, in one-letter code: Phosphoserine aminotransferase (364 aa).

Arg41 is a binding site for L-glutamate. Pyridoxal 5'-phosphate is bound by residues 75-76, Trp100, Thr155, Asp175, and Gln198; that span reads AS. Lys199 is modified (N6-(pyridoxal phosphate)lysine). Residue 239-240 participates in pyridoxal 5'-phosphate binding; it reads NT.

It belongs to the class-V pyridoxal-phosphate-dependent aminotransferase family. SerC subfamily. As to quaternary structure, homodimer. It depends on pyridoxal 5'-phosphate as a cofactor.

Its subcellular location is the cytoplasm. It carries out the reaction O-phospho-L-serine + 2-oxoglutarate = 3-phosphooxypyruvate + L-glutamate. The catalysed reaction is 4-(phosphooxy)-L-threonine + 2-oxoglutarate = (R)-3-hydroxy-2-oxo-4-phosphooxybutanoate + L-glutamate. It functions in the pathway amino-acid biosynthesis; L-serine biosynthesis; L-serine from 3-phospho-D-glycerate: step 2/3. Catalyzes the reversible conversion of 3-phosphohydroxypyruvate to phosphoserine and of 3-hydroxy-2-oxo-4-phosphonooxybutanoate to phosphohydroxythreonine. The sequence is that of Phosphoserine aminotransferase from Streptococcus uberis (strain ATCC BAA-854 / 0140J).